A 448-amino-acid polypeptide reads, in one-letter code: Protein ECM7 (448 aa).

The Cytoplasmic portion of the chain corresponds to M1 to R28. A helical transmembrane segment spans residues L29–S49. Topologically, residues P50–N204 are extracellular. The chain crosses the membrane as a helical span at residues V205 to W225. The Cytoplasmic portion of the chain corresponds to Y226 to N246. The helical transmembrane segment at S247–V267 threads the bilayer. The Extracellular portion of the chain corresponds to N268–H287. Residues L288–L308 traverse the membrane as a helical segment. The Cytoplasmic portion of the chain corresponds to A309 to F448. Composition is skewed to polar residues over residues Y351 to G363 and V383 to N406. 2 disordered regions span residues Y351 to E411 and R427 to F448.

The protein resides in the membrane. Functionally, may be involved in cell wall organization and biogenesis. In Saccharomyces cerevisiae (strain ATCC 204508 / S288c) (Baker's yeast), this protein is Protein ECM7 (ECM7).